Reading from the N-terminus, the 270-residue chain is Diaminopimelate epimerase (270 aa).

The substrate site is built by asparagine 15, glutamine 49, and asparagine 66. The active-site Proton donor is cysteine 75. Residues 76–77 (GN), asparagine 155, asparagine 187, and 204–205 (ER) contribute to the substrate site. The Proton acceptor role is filled by cysteine 213. Position 214 to 215 (214 to 215 (GS)) interacts with substrate.

This sequence belongs to the diaminopimelate epimerase family. As to quaternary structure, homodimer.

The protein resides in the cytoplasm. The enzyme catalyses (2S,6S)-2,6-diaminopimelate = meso-2,6-diaminopimelate. It functions in the pathway amino-acid biosynthesis; L-lysine biosynthesis via DAP pathway; DL-2,6-diaminopimelate from LL-2,6-diaminopimelate: step 1/1. Catalyzes the stereoinversion of LL-2,6-diaminopimelate (L,L-DAP) to meso-diaminopimelate (meso-DAP), a precursor of L-lysine and an essential component of the bacterial peptidoglycan. In Rickettsia rickettsii (strain Iowa), this protein is Diaminopimelate epimerase.